Reading from the N-terminus, the 192-residue chain is Transcription termination/antitermination protein NusG (192 aa).

Belongs to the NusG family.

Participates in transcription elongation, termination and antitermination. In Rickettsia prowazekii (strain Madrid E), this protein is Transcription termination/antitermination protein NusG.